The primary structure comprises 199 residues: Superoxide dismutase [Mn] 2 (199 aa).

Mn(2+) is bound by residues His28, His75, Asp157, and His161.

It belongs to the iron/manganese superoxide dismutase family. Mn(2+) serves as cofactor.

The enzyme catalyses 2 superoxide + 2 H(+) = H2O2 + O2. In terms of biological role, destroys superoxide anion radicals which are normally produced within the cells and which are toxic to biological systems. In Haloferax volcanii (strain ATCC 29605 / DSM 3757 / JCM 8879 / NBRC 14742 / NCIMB 2012 / VKM B-1768 / DS2) (Halobacterium volcanii), this protein is Superoxide dismutase [Mn] 2 (sod2).